The primary structure comprises 90 residues: MARTVQCIKLGKEAEGLDFPPYPGELGKRIFENVSKEAWAGWLKHQTMLVNENRLNLADARARQYLARQMEQHFFGGGADAAAGYVPPSA.

The protein belongs to the Fe(2+)-trafficking protein family.

Functionally, could be a mediator in iron transactions between iron acquisition and iron-requiring processes, such as synthesis and/or repair of Fe-S clusters in biosynthetic enzymes. In Paracidovorax citrulli (strain AAC00-1) (Acidovorax citrulli), this protein is Probable Fe(2+)-trafficking protein.